We begin with the raw amino-acid sequence, 1138 residues long: MEAAPGTAAAAAKPAKSCKKYRMGKRHANIYTYQEPPHSNSDEDISEEKADSQDPEQVFQNIQYQKEVMSNIRCRPWPMRQKLRVLRQAKEIVLKYEGRLTRTRGYQAAGAELWRKFLRLAYNFVVLFIPWEMRIKKIESHFGSGVASYFIFLRWLFGINIVLTIMTGAFVVLPELLAGAPFGSTVSKTIRQEDLKTAQDLDTIWSLGGYLQYSVLFYGYYGSDRKIGKAGYRLPLAYFLVGMAVFAYSFIILLKKMAKNSRMSLASASDENYTFCWRLFCAWDYLIGNPEAAESKAAAIVNSIREAILEEQEKKKSKNLAVTISLRIIANILVLLSLTGSIYIIYFVVDRSQKLENNKRELTLWEKNEVSVVVSLITMIAPSAFELVAALEMYHPRTTLRFQLARVLVLYLGNLYSLIIALLDKVNSMSVTNSIYSIYQVSNNSTPSSATGTPAKEDTLSATISDAQMNSSESHAQSLPTAGSLVNNTASSNSAQNQCWETYVGQEMLKLSIIDMIFTVASILLIDFFRGLCVRYLSDCWCWDLESKFPEYGEFKIAENVLHLVYNQGMIWMGAFFSPCLPAFNVLKLIGLMYLRSWAVLTCNVPHQQVFRASRSNNFYLAMLLFMLFLCMLPTIFAIARYKPSLSCGPFSGQEKIYDIVSETIQNDFPAWFNSVIAYISSPVVVLPALLLLFMLIYYLQSIARSLKFTNNQLRMKIQAERTEDKKKVVQMAVGQNLVDIPDDQIMSDFTQNSEGTRFQSLDGSDKRPDKDGGLISQESSVRASTPRKNGSVLNFESPVSKGTRIQTISQTVPHAVPSTDVARPVNTTPTTSASLTPAPSVSSAQKPRNDHTTNRYPSVVHGSASELCKTKPYTPVTFKKRIGDVHSEPLFRKSIRQVNPDAFGAGAPVFVGRRPHATRYFIVNENEPRKKSARSTSRLQRQFRIEEPEDIVELYPCNVRRYVVQTPQCMYSPHPSEDEEDEEALGRHYVKRSHRPRSLSDLRPAPRFYIGDRADGHVLTSKVHYKSWDDGFELDLDRPPYAYKKVHLKNVEADQHYLEPQVKPKTKHMLEQSLTESDSVSIESSSDPQNSSNDQYIQVIHSKEKYLKPGTKLTKKKSNTNIELNMSEPNELVCSNV.

The span at 1–15 (MEAAPGTAAAAAKPA) shows a compositional bias: low complexity. 2 disordered regions span residues 1–20 (MEAA…SCKK) and 29–54 (NIYT…DSQD). The Cytoplasmic portion of the chain corresponds to 1-155 (MEAAPGTAAA…VASYFIFLRW (155 aa)). A helical transmembrane segment spans residues 156 to 176 (LFGINIVLTIMTGAFVVLPEL). The Extracellular segment spans residues 177-202 (LAGAPFGSTVSKTIRQEDLKTAQDLD). Residues 203–223 (TIWSLGGYLQYSVLFYGYYGS) traverse the membrane as a helical segment. The Cytoplasmic portion of the chain corresponds to 224 to 233 (DRKIGKAGYR). A helical transmembrane segment spans residues 234–254 (LPLAYFLVGMAVFAYSFIILL). Residues 255-327 (KKMAKNSRMS…KNLAVTISLR (73 aa)) lie on the Extracellular side of the membrane. N-linked (GlcNAc...) asparagine glycosylation occurs at Asn-272. A helical transmembrane segment spans residues 328-348 (IIANILVLLSLTGSIYIIYFV). Over 349-369 (VDRSQKLENNKRELTLWEKNE) the chain is Cytoplasmic. The chain crosses the membrane as a helical span at residues 370–390 (VSVVVSLITMIAPSAFELVAA). Residues 391 to 401 (LEMYHPRTTLR) lie on the Extracellular side of the membrane. A helical transmembrane segment spans residues 402–422 (FQLARVLVLYLGNLYSLIIAL). Residues 423–508 (LDKVNSMSVT…CWETYVGQEM (86 aa)) lie on the Cytoplasmic side of the membrane. Residues 509 to 529 (LKLSIIDMIFTVASILLIDFF) traverse the membrane as a helical segment. Over 530 to 569 (RGLCVRYLSDCWCWDLESKFPEYGEFKIAENVLHLVYNQG) the chain is Extracellular. Residues 570–590 (MIWMGAFFSPCLPAFNVLKLI) traverse the membrane as a helical segment. The Cytoplasmic portion of the chain corresponds to 591 to 618 (GLMYLRSWAVLTCNVPHQQVFRASRSNN). A helical membrane pass occupies residues 619 to 639 (FYLAMLLFMLFLCMLPTIFAI). Topologically, residues 640–676 (ARYKPSLSCGPFSGQEKIYDIVSETIQNDFPAWFNSV) are extracellular. The chain crosses the membrane as a helical span at residues 677 to 697 (IAYISSPVVVLPALLLLFMLI). Residues 698–1138 (YYLQSIARSL…EPNELVCSNV (441 aa)) lie on the Cytoplasmic side of the membrane. Positions 753 to 763 (NSEGTRFQSLD) are enriched in polar residues. 3 disordered regions span residues 753-859 (NSEG…RYPS), 973-1005 (SPHP…DLRP), and 1065-1095 (PKTK…SSND). Positions 764-773 (GSDKRPDKDG) are enriched in basic and acidic residues. Composition is skewed to polar residues over residues 777–795 (SQES…SVLN) and 804–813 (TRIQTISQTV). The span at 828–845 (TTPTTSASLTPAPSVSSA) shows a compositional bias: low complexity. Basic residues predominate over residues 989-998 (HYVKRSHRPR). Residues 1074–1095 (SLTESDSVSIESSSDPQNSSND) are compositionally biased toward low complexity.

This sequence belongs to the TMC family. In terms of tissue distribution, expressed in a range of tissues including cerebrum, cerebellum, retina, cochlea, lung, liver and heart. Also expressed in the apical, medial and basal portions of the basillar papilla.

It localises to the membrane. Functionally, probable component of an ion channel. The chain is Transmembrane channel-like protein 3 from Gallus gallus (Chicken).